The chain runs to 246 residues: MKIYLKFKSYNKRICKLLQLFKLEHDQNCSMGLLINHNSLELYNRDNVNQKPIKVDFTSKKNHYRCHHFRRKNEVLYRVSGIKNSYFPTVLDATAGLGNDAFIFSFLGCKVIMIERHPIVAALLKDGLQRGYQDKKIGHWLQTRLHLIVNDSLKMLEIPILQPDVIYLDPMYPFYHKKSLPKKDMQFFRQLIGHNYDSKKLLEVSRKLAKNRIIVKRPYYAKPLSEDKVNHIVTTRNHRFDIYQPF.

Residues 115–116 (ER) and Asp-169 contribute to the S-adenosyl-L-methionine site.

It belongs to the methyltransferase superfamily. RsmJ family.

It is found in the cytoplasm. It catalyses the reaction guanosine(1516) in 16S rRNA + S-adenosyl-L-methionine = N(2)-methylguanosine(1516) in 16S rRNA + S-adenosyl-L-homocysteine + H(+). In terms of biological role, specifically methylates the guanosine in position 1516 of 16S rRNA. The polypeptide is Ribosomal RNA small subunit methyltransferase J (Buchnera aphidicola subsp. Acyrthosiphon pisum (strain 5A)).